The following is a 333-amino-acid chain: Foldase protein PrsA (333 aa).

Residues 1 to 22 form the signal peptide; it reads MKKSTKLLAGIVTLASAMTLAA. Cys23 carries the N-palmitoyl cysteine lipid modification. Cys23 is lipidated: S-diacylglycerol cysteine. The region spanning 145 to 240 is the PpiC domain; the sequence is TPEMTTQVIT…NKFYIVKVTK (96 aa). The disordered stretch occupies residues 301 to 333; sequence DKKASKANTSKSDQKTSSDSSKDSQSSKSKSEK. Positions 312-322 are enriched in basic and acidic residues; the sequence is SDQKTSSDSSK. A compositionally biased stretch (low complexity) spans 323–333; that stretch reads DSQSSKSKSEK.

Belongs to the PrsA family.

Its subcellular location is the cell membrane. It catalyses the reaction [protein]-peptidylproline (omega=180) = [protein]-peptidylproline (omega=0). In terms of biological role, plays a major role in protein secretion by helping the post-translocational extracellular folding of several secreted proteins. The protein is Foldase protein PrsA of Streptococcus equi subsp. zooepidemicus (strain H70).